Here is a 393-residue protein sequence, read N- to C-terminus: NAD(P)H-quinone oxidoreductase subunit H, chloroplastic (393 aa).

Belongs to the complex I 49 kDa subunit family. In terms of assembly, NDH is composed of at least 16 different subunits, 5 of which are encoded in the nucleus.

The protein resides in the plastid. Its subcellular location is the chloroplast thylakoid membrane. The enzyme catalyses a plastoquinone + NADH + (n+1) H(+)(in) = a plastoquinol + NAD(+) + n H(+)(out). It carries out the reaction a plastoquinone + NADPH + (n+1) H(+)(in) = a plastoquinol + NADP(+) + n H(+)(out). NDH shuttles electrons from NAD(P)H:plastoquinone, via FMN and iron-sulfur (Fe-S) centers, to quinones in the photosynthetic chain and possibly in a chloroplast respiratory chain. The immediate electron acceptor for the enzyme in this species is believed to be plastoquinone. Couples the redox reaction to proton translocation, and thus conserves the redox energy in a proton gradient. The protein is NAD(P)H-quinone oxidoreductase subunit H, chloroplastic of Vitis vinifera (Grape).